We begin with the raw amino-acid sequence, 351 residues long: Transcription elongation factor A N-terminal and central domain-containing protein (351 aa).

The 78-residue stretch at 5-82 (NQIAARASLI…SKWKAVYKQT (78 aa)) folds into the TFIIS N-terminal domain. Disordered regions lie at residues 86–119 (ARNSPKLFPVRGNKEENSGPSHDPSQNETLGICS) and 144–169 (LKPKEEHFGDGDPESTGKRSSELLDP). Over residues 103 to 119 (SGPSHDPSQNETLGICS) the composition is skewed to polar residues. Basic and acidic residues predominate over residues 145–165 (KPKEEHFGDGDPESTGKRSSE). Residues 173–289 (MRTKCIELLY…EHYLPQVIDG (117 aa)) form the TFIIS central domain.

This chain is Transcription elongation factor A N-terminal and central domain-containing protein (TCEANC), found in Homo sapiens (Human).